Consider the following 91-residue polypeptide: Small ribosomal subunit protein uS19 (91 aa).

It belongs to the universal ribosomal protein uS19 family.

In terms of biological role, protein S19 forms a complex with S13 that binds strongly to the 16S ribosomal RNA. The sequence is that of Small ribosomal subunit protein uS19 from Ectopseudomonas mendocina (strain ymp) (Pseudomonas mendocina).